Consider the following 364-residue polypeptide: Dihydroorotate dehydrogenase (quinone) (364 aa).

FMN-binding positions include 61-65 and Thr-85; that span reads AGYDK. Lys-65 is a binding site for substrate. 110 to 114 provides a ligand contact to substrate; it reads NRLGF. 2 residues coordinate FMN: Asn-139 and Asn-170. A substrate-binding site is contributed by Asn-170. The Nucleophile role is filled by Ser-173. Asn-175 contacts substrate. The FMN site is built by Lys-215 and Ser-243. 244–245 is a substrate binding site; sequence NT. FMN is bound by residues Gly-266, Gly-295, and 316–317; that span reads YT.

It belongs to the dihydroorotate dehydrogenase family. Type 2 subfamily. Monomer. Requires FMN as cofactor.

The protein localises to the cell membrane. It catalyses the reaction (S)-dihydroorotate + a quinone = orotate + a quinol. It functions in the pathway pyrimidine metabolism; UMP biosynthesis via de novo pathway; orotate from (S)-dihydroorotate (quinone route): step 1/1. Its function is as follows. Catalyzes the conversion of dihydroorotate to orotate with quinone as electron acceptor. The protein is Dihydroorotate dehydrogenase (quinone) of Brucella anthropi (strain ATCC 49188 / DSM 6882 / CCUG 24695 / JCM 21032 / LMG 3331 / NBRC 15819 / NCTC 12168 / Alc 37) (Ochrobactrum anthropi).